The sequence spans 446 residues: 6-methylsalicylate 1-monooxygenase atA (446 aa).

The chain crosses the membrane as a helical span at residues 7–27 (VSVAIIGGGIGGLSLAIGLLQ). 2 residues coordinate FAD: Glu-37 and Ala-50. Asn-107 is a glycosylation site (N-linked (GlcNAc...) asparagine). Residue Arg-116 coordinates FAD. Arg-200 is a catalytic residue. Residues Asp-311 and Ala-324 each contribute to the FAD site.

The protein belongs to the paxM FAD-dependent monooxygenase family. The cofactor is FAD.

The protein localises to the membrane. It catalyses the reaction 6-methylsalicylate + AH2 + O2 + H(+) = 3-methylcatechol + A + CO2 + H2O. Its pathway is secondary metabolite biosynthesis. Its function is as follows. 6-methylsalicylate 1-monooxygenase; part of the gene cluster that mediates the biosynthesis of terreic acid, a quinone epoxide inhibitor of Bruton's tyrosine kinase. The first step of the pathway is the synthesis of 6-methylsalicylic acid (6-MSA) by the 6-methylsalicylic acid synthase atX. In the biosynthesis of 6-MSA, atX utilizes one acetyl-CoA and three malonyl-CoAs as its substrates and catalyzes a series of programmed reactions including Claisen condensation, reduction, aldol cyclization, and the hydrolytic cleavage that yields 6-MSA. The 6-methylsalicylate 1-monooxygenase atA then catalyzes the decarboxylative hydroxylation of 6-MSA to 3-methylcatechol. The next step is the conversion of 3-methylcatechol to 3-methyl-1,2,4-benzenetriol by cytochrome P450 monooxygenase atE, which is enhanced by cytochrome P450 monooxygenase atG. Then, the epoxidase atD catalyzes the epoxidation and hydroxyl oxidation of 3-methyl-1,2,4-benzenetriol to terremutin. Lastly, GMC oxidoreductase atC oxidizes terremutin to terreic acid. The protein is 6-methylsalicylate 1-monooxygenase atA of Aspergillus terreus (strain NIH 2624 / FGSC A1156).